The following is a 484-amino-acid chain: Probable glycine dehydrogenase (decarboxylating) subunit 2 (484 aa).

At K264 the chain carries N6-(pyridoxal phosphate)lysine.

Belongs to the GcvP family. C-terminal subunit subfamily. The glycine cleavage system is composed of four proteins: P, T, L and H. In this organism, the P 'protein' is a heterodimer of two subunits. Pyridoxal 5'-phosphate is required as a cofactor.

The catalysed reaction is N(6)-[(R)-lipoyl]-L-lysyl-[glycine-cleavage complex H protein] + glycine + H(+) = N(6)-[(R)-S(8)-aminomethyldihydrolipoyl]-L-lysyl-[glycine-cleavage complex H protein] + CO2. Functionally, the glycine cleavage system catalyzes the degradation of glycine. The P protein binds the alpha-amino group of glycine through its pyridoxal phosphate cofactor; CO(2) is released and the remaining methylamine moiety is then transferred to the lipoamide cofactor of the H protein. The chain is Probable glycine dehydrogenase (decarboxylating) subunit 2 from Legionella pneumophila (strain Corby).